A 458-amino-acid chain; its full sequence is Phosphoglucosamine mutase (458 aa).

The active-site Phosphoserine intermediate is the Ser106. Residues Ser106, Asp247, Asp249, and Asp251 each contribute to the Mg(2+) site. A Phosphoserine modification is found at Ser106.

Belongs to the phosphohexose mutase family. Mg(2+) is required as a cofactor. Post-translationally, activated by phosphorylation.

It carries out the reaction alpha-D-glucosamine 1-phosphate = D-glucosamine 6-phosphate. Catalyzes the conversion of glucosamine-6-phosphate to glucosamine-1-phosphate. The polypeptide is Phosphoglucosamine mutase (Chlamydia trachomatis serovar L2 (strain ATCC VR-902B / DSM 19102 / 434/Bu)).